The sequence spans 279 residues: HTH-type transcriptional regulator BhcR (279 aa).

A compositionally biased stretch (basic residues) spans 1–13 (MSVQIRKRGRPRG). Residues 1–21 (MSVQIRKRGRPRGRAGGLGAE) form a disordered region. The HTH iclR-type domain occupies 26-87 (IRALDRALDI…SQTQAWHVGP (62 aa)). The H-T-H motif DNA-binding region spans 47–66 (LTEIAQRLDMAPSTVHRVLV). One can recognise an IclR-ED domain in the interval 102-271 (LVERARPLLR…ARELSFGMAP (170 aa)).

Its function is as follows. Transcriptional regulator of the bhc gene cluster involved in glycolate and glyoxylate assimilation via the beta-hydroxyaspartate cycle (BHAC). Glyoxylate negatively affects the interaction of BhcR with the promoter region of the bhc gene cluster. In Paracoccus denitrificans (strain Pd 1222), this protein is HTH-type transcriptional regulator BhcR.